The primary structure comprises 213 residues: 3-isopropylmalate dehydratase small subunit (213 aa).

It belongs to the LeuD family. LeuD type 1 subfamily. Heterodimer of LeuC and LeuD.

It catalyses the reaction (2R,3S)-3-isopropylmalate = (2S)-2-isopropylmalate. It functions in the pathway amino-acid biosynthesis; L-leucine biosynthesis; L-leucine from 3-methyl-2-oxobutanoate: step 2/4. In terms of biological role, catalyzes the isomerization between 2-isopropylmalate and 3-isopropylmalate, via the formation of 2-isopropylmaleate. The chain is 3-isopropylmalate dehydratase small subunit from Pseudomonas syringae pv. tomato (strain ATCC BAA-871 / DC3000).